Consider the following 262-residue polypeptide: Small ribosomal subunit protein uS2 (262 aa).

Positions 223 to 262 are disordered; the sequence is KSLLEQDGGEQAAGEEVSQDEKDAVVAEAMSEEDFGEDEE. A compositionally biased stretch (low complexity) spans 227–238; sequence EQDGGEQAAGEE. Acidic residues predominate over residues 252–262; sequence MSEEDFGEDEE.

The protein belongs to the universal ribosomal protein uS2 family.

In Campylobacter concisus (strain 13826), this protein is Small ribosomal subunit protein uS2.